The chain runs to 154 residues: Ribosomal RNA large subunit methyltransferase H (154 aa).

S-adenosyl-L-methionine-binding positions include leucine 70, glycine 102, and 121-126; that span reads LSRLTF.

It belongs to the RNA methyltransferase RlmH family. As to quaternary structure, homodimer.

Its subcellular location is the cytoplasm. The enzyme catalyses pseudouridine(1915) in 23S rRNA + S-adenosyl-L-methionine = N(3)-methylpseudouridine(1915) in 23S rRNA + S-adenosyl-L-homocysteine + H(+). Specifically methylates the pseudouridine at position 1915 (m3Psi1915) in 23S rRNA. This Geobacter metallireducens (strain ATCC 53774 / DSM 7210 / GS-15) protein is Ribosomal RNA large subunit methyltransferase H.